We begin with the raw amino-acid sequence, 218 residues long: uncharacterized protein (218 aa).

The helical transmembrane segment at 11 to 31 (AAGLFPLALMLSGCISYALVS) threads the bilayer.

The protein localises to the membrane. This is an uncharacterized protein from Escherichia coli (strain K12).